Reading from the N-terminus, the 67-residue chain is Conotoxin TsMMSK-011 (67 aa).

Positions 1 to 20 (MMSKLGVLLTICLLLFPLTA) are cleaved as a signal peptide. The propeptide occupies 21-50 (VQLDGDQPADLPALRTQDIATDHSPWFDPV). 3 disulfides stabilise this stretch: C53–C65, C54–C61, and C58–C64. Position 63 is a 4-hydroxyproline (P63).

It belongs to the conotoxin M superfamily. Expressed by the venom duct.

The protein localises to the secreted. The sequence is that of Conotoxin TsMMSK-011 from Conus tessulatus (Tessellate cone).